The chain runs to 789 residues: Transducer protein Htr6 (789 aa).

The next 2 membrane-spanning stretches (helical) occupy residues 29–49 (FAVA…FAFQ) and 294–314 (TVTV…IALG). HAMP domains are found at residues 315 to 367 (RHTV…DRIQ) and 409 to 462 (ERLQ…ATIA). In terms of domain architecture, Methyl-accepting transducer spans 481–717 (GAEEIETTSQ…SVVRRVDDVA (237 aa)). The segment at 763–789 (NQFETRADADEPDADTTVDASADDTGD) is disordered. The segment covering 772-789 (DEPDADTTVDASADDTGD) has biased composition (acidic residues).

It belongs to the methyl-accepting chemotaxis (MCP) protein family. Post-translationally, methylated by CheR.

It localises to the cell membrane. Its function is as follows. Potentially involved in chemo- or phototactic signal transduction. This chain is Transducer protein Htr6 (htr6), found in Halobacterium salinarum (strain ATCC 29341 / DSM 671 / R1).